The following is a 411-amino-acid chain: Multifunctional CCA protein (411 aa).

2 residues coordinate ATP: Gly8 and Arg11. CTP is bound by residues Gly8 and Arg11. Mg(2+) contacts are provided by Asp21 and Asp23. 3 residues coordinate ATP: Arg91, Arg137, and Arg140. CTP is bound by residues Arg91, Arg137, and Arg140. Residues Cys228–Trp329 form the HD domain.

It belongs to the tRNA nucleotidyltransferase/poly(A) polymerase family. Bacterial CCA-adding enzyme type 1 subfamily. As to quaternary structure, monomer. Can also form homodimers and oligomers. Mg(2+) serves as cofactor. Requires Ni(2+) as cofactor.

The catalysed reaction is a tRNA precursor + 2 CTP + ATP = a tRNA with a 3' CCA end + 3 diphosphate. It catalyses the reaction a tRNA with a 3' CCA end + 2 CTP + ATP = a tRNA with a 3' CCACCA end + 3 diphosphate. Catalyzes the addition and repair of the essential 3'-terminal CCA sequence in tRNAs without using a nucleic acid template. Adds these three nucleotides in the order of C, C, and A to the tRNA nucleotide-73, using CTP and ATP as substrates and producing inorganic pyrophosphate. tRNA 3'-terminal CCA addition is required both for tRNA processing and repair. Also involved in tRNA surveillance by mediating tandem CCA addition to generate a CCACCA at the 3' terminus of unstable tRNAs. While stable tRNAs receive only 3'-terminal CCA, unstable tRNAs are marked with CCACCA and rapidly degraded. The protein is Multifunctional CCA protein of Photobacterium profundum (strain SS9).